The chain runs to 1395 residues: DNA-directed RNA polymerase subunit beta' (1395 aa).

4 residues coordinate Zn(2+): cysteine 70, cysteine 72, cysteine 85, and cysteine 88. Mg(2+) contacts are provided by aspartate 461, aspartate 463, and aspartate 465. Residues cysteine 815, cysteine 889, cysteine 896, and cysteine 899 each contribute to the Zn(2+) site.

This sequence belongs to the RNA polymerase beta' chain family. As to quaternary structure, the RNAP catalytic core consists of 2 alpha, 1 beta, 1 beta' and 1 omega subunit. When a sigma factor is associated with the core the holoenzyme is formed, which can initiate transcription. The cofactor is Mg(2+). It depends on Zn(2+) as a cofactor.

The catalysed reaction is RNA(n) + a ribonucleoside 5'-triphosphate = RNA(n+1) + diphosphate. DNA-dependent RNA polymerase catalyzes the transcription of DNA into RNA using the four ribonucleoside triphosphates as substrates. The polypeptide is DNA-directed RNA polymerase subunit beta' (Ruthia magnifica subsp. Calyptogena magnifica).